The primary structure comprises 212 residues: Probable chemoreceptor glutamine deamidase CheD (212 aa).

The protein belongs to the CheD family.

It carries out the reaction L-glutaminyl-[protein] + H2O = L-glutamyl-[protein] + NH4(+). Probably deamidates glutamine residues to glutamate on methyl-accepting chemotaxis receptors (MCPs), playing an important role in chemotaxis. This chain is Probable chemoreceptor glutamine deamidase CheD, found in Bordetella parapertussis (strain 12822 / ATCC BAA-587 / NCTC 13253).